We begin with the raw amino-acid sequence, 113 residues long: uncharacterized protein (113 aa).

This is an uncharacterized protein from Escherichia coli (strain K12).